The chain runs to 116 residues: MRIFLDANVIADWILLKNKNQDASDPLLTERYRHMAESFKLVEEILKLKEKVSGTSQMAIAEVFGVIYDDAINMKLFREAVPASSWYWFSIRERKALSEDSQQLFLMEPHTSPQGI.

This is an uncharacterized protein from Archaeoglobus fulgidus (strain ATCC 49558 / DSM 4304 / JCM 9628 / NBRC 100126 / VC-16).